We begin with the raw amino-acid sequence, 591 residues long: Paxillin (591 aa).

An N-acetylmethionine modification is found at M1. N-acetylserine is present on D2. The LD motif 1 signature appears at 3–15 (DLDALLADLESTT). The interval 17–138 (HISKRPVFLS…PSPTVMSTSL (122 aa)) is disordered. Y31 carries the post-translational modification Phosphotyrosine; by PTK6. Residues 45–54 (VPPPVPPPPS) are compositionally biased toward pro residues. A compositionally biased stretch (polar residues) spans 69–106 (WQPSSSRFIHQQPQSSSPVYGSSAKTSSVSNPQDSVGS). Phosphoserine occurs at positions 83 and 85. The residue at position 88 (Y88) is a Phosphotyrosine. At S106 the chain carries Phosphoserine. At Y118 the chain carries Phosphotyrosine; by PTK6. Residues S119, S126, and S130 each carry the phosphoserine modification. The segment covering 121-137 (PNKQKSAEPSPTVMSTS) has biased composition (polar residues). T132 carries the phosphothreonine modification. Residues S137, S140, and S143 each carry the phosphoserine modification. The short motif at 144 to 156 (ELDRLLLELNAVQ) is the LD motif 2 element. The segment at 159-260 (PPGFPADEAN…TQQQTRISAS (102 aa)) is disordered. Position 181 is a phosphotyrosine (Y181). The LD motif 3 signature appears at 216 to 228 (SVESLLDELESSV). S230 is subject to Phosphoserine. Positions 236–260 (TVNQGEMSSPQRVTSTQQQTRISAS) are enriched in polar residues. S244 carries the phosphoserine; by CDK5 modification. A Phosphoserine; by SLK modification is found at S250. A phosphoserine mark is found at S258, S261, S272, S303, S322, S332, and S340. The interval 262–315 (ATRELDELMASLSDFKIQGLEQRADGERCWAAGWPRDGGRSSPGGQDEGGFMAQ) is required for binding to PARVA and ILK. An LD motif 4 motif is present at residues 265–276 (ELDELMASLSDF). Residues 291 to 335 (WAAGWPRDGGRSSPGGQDEGGFMAQGKTGSSSPPGGPPKPGSQLD) are disordered. The LD motif 5 motif lies at 333–345 (QLDSMLGSLQSDL). LIM zinc-binding domains are found at residues 356-415 (GVCG…LFSP), 416-473 (RCYY…DMFA), 474-533 (PKCG…RRGS), and 534-591 (LCSG…KLFC). S533 bears the Phosphoserine mark.

It belongs to the paxillin family. In terms of assembly, interacts in vitro with VCL/vinculin as well as to the SH3 domain of SRC and, when tyrosine phosphorylated, to the SH2 domain of CRK. Interacts with GIT1. Interacts with NUDT16L1/SDOS. Interacts with PTK2/FAK1. Interacts with PTK2B/PYK2. Interacts with ASAP2. Interacts with unphosphorylated ITGA4. Interacts with RNF5. Interacts with PDCD10. Interacts with NEK3, the interaction is prolactin-dependent. Interacts with PTK6. Interacts with TGFB1I1. Interacts with SORBS1. Interacts with PARVB. Interacts (via LD motif 4) with PARVA/PARVIN. Interacts (via LD motif 4) with ILK. Interacts (via cytoplasmic domain) with CEACAM1; the interaction is phosphotyrosyl-dependent. Interacts with LIMA1; this complex stabilizes actin dynamics. Interacts with CD36 (via C-terminus). Interacts with TRIM15. Interacts with PAK4; PAK4 acts as a scaffold to suppport PAXI phosphorylation at Ser-272. As to quaternary structure, interacts strongly with PTK2/FAK1 and weakly with VCL/vinculin. Interacts strongly with VCL/vinculin but only weakly with PTK2/FAK1. In terms of processing, phosphorylated by MAPK1/ERK2. Phosphorylated on tyrosine residues during integrin-mediated cell adhesion, embryonic development, fibroblast transformation and following stimulation of cells by mitogens. Phosphorylation at Ser-244 by CDK5 reduces its interaction with PTK2/FAK1 in matrix-cell focal adhesions (MCFA) during oligodendrocytes (OLs) differentiation. Phosphorylation at Tyr-31 and Tyr-118 by PTK6 promote the activation of RAC1 via CRK/CrKII, thereby promoting migration and invasion. Phosphorylation at Ser-250 by SLK is required for PXN redistribution and cell motility. Phosphorylation at Ser-272 promotes focal adhesion disassembly during cell migration.

The protein localises to the cytoplasm. It is found in the cytoskeleton. Its subcellular location is the cell junction. The protein resides in the focal adhesion. It localises to the cell cortex. Cytoskeletal protein involved in actin-membrane attachment at sites of cell adhesion to the extracellular matrix (focal adhesion). Recruits other proteins such as TRIM15 to focal adhesion. The sequence is that of Paxillin from Homo sapiens (Human).